A 286-amino-acid polypeptide reads, in one-letter code: Large ribosomal subunit protein uL3 (286 aa).

Q152 is subject to N5-methylglutamine. Low complexity predominate over residues 246 to 265 (EAAAAAAAAEEQAAMEAAEA). The interval 246-286 (EAAAAAAAAEEQAAMEAAEAAEAKTDTVAEAEAAEKKEGDA) is disordered. Basic and acidic residues predominate over residues 266–286 (AEAKTDTVAEAEAAEKKEGDA).

The protein belongs to the universal ribosomal protein uL3 family. Part of the 50S ribosomal subunit. Forms a cluster with proteins L14 and L19. Post-translationally, methylated by PrmB.

Its function is as follows. One of the primary rRNA binding proteins, it binds directly near the 3'-end of the 23S rRNA, where it nucleates assembly of the 50S subunit. This chain is Large ribosomal subunit protein uL3, found in Roseobacter denitrificans (strain ATCC 33942 / OCh 114) (Erythrobacter sp. (strain OCh 114)).